Consider the following 121-residue polypeptide: MIQMESLVQVADNTGARSAKMIGVIGKRTRQAHIGDIITCHIRESIPTASVKKGTVVKAVVVRTAAPIRRDDGSVLRFDGNAVVIIDKDNNPRGTRIFGPVARELREKKFMKIVSLAPEVL.

The protein belongs to the universal ribosomal protein uL14 family. Part of the 50S ribosomal subunit. Forms a cluster with proteins L3 and L19. In the 70S ribosome, L14 and L19 interact and together make contacts with the 16S rRNA in bridges B5 and B8.

Binds to 23S rRNA. Forms part of two intersubunit bridges in the 70S ribosome. In Akkermansia muciniphila (strain ATCC BAA-835 / DSM 22959 / JCM 33894 / BCRC 81048 / CCUG 64013 / CIP 107961 / Muc), this protein is Large ribosomal subunit protein uL14.